We begin with the raw amino-acid sequence, 404 residues long: Probable tRNA sulfurtransferase (404 aa).

Residues 60–165 (QPVVEALKLV…DEAAYISYEE (106 aa)) form the THUMP domain. ATP contacts are provided by residues 183-184 (ML), 208-209 (HF), Arg265, Gly287, and Gln296.

It belongs to the ThiI family.

The protein resides in the cytoplasm. It catalyses the reaction [ThiI sulfur-carrier protein]-S-sulfanyl-L-cysteine + a uridine in tRNA + 2 reduced [2Fe-2S]-[ferredoxin] + ATP + H(+) = [ThiI sulfur-carrier protein]-L-cysteine + a 4-thiouridine in tRNA + 2 oxidized [2Fe-2S]-[ferredoxin] + AMP + diphosphate. The enzyme catalyses [ThiS sulfur-carrier protein]-C-terminal Gly-Gly-AMP + S-sulfanyl-L-cysteinyl-[cysteine desulfurase] + AH2 = [ThiS sulfur-carrier protein]-C-terminal-Gly-aminoethanethioate + L-cysteinyl-[cysteine desulfurase] + A + AMP + 2 H(+). It functions in the pathway cofactor biosynthesis; thiamine diphosphate biosynthesis. Catalyzes the ATP-dependent transfer of a sulfur to tRNA to produce 4-thiouridine in position 8 of tRNAs, which functions as a near-UV photosensor. Also catalyzes the transfer of sulfur to the sulfur carrier protein ThiS, forming ThiS-thiocarboxylate. This is a step in the synthesis of thiazole, in the thiamine biosynthesis pathway. The sulfur is donated as persulfide by IscS. This is Probable tRNA sulfurtransferase from Streptococcus pyogenes serotype M6 (strain ATCC BAA-946 / MGAS10394).